A 637-amino-acid polypeptide reads, in one-letter code: Biosynthetic arginine decarboxylase (637 aa).

An N6-(pyridoxal phosphate)lysine modification is found at lysine 107. 289–299 contacts substrate; the sequence is LDVGGGLGVDY.

This sequence belongs to the Orn/Lys/Arg decarboxylase class-II family. SpeA subfamily. Mg(2+) is required as a cofactor. The cofactor is pyridoxal 5'-phosphate.

It catalyses the reaction L-arginine + H(+) = agmatine + CO2. In terms of biological role, catalyzes the biosynthesis of agmatine from arginine. This Thermosynechococcus vestitus (strain NIES-2133 / IAM M-273 / BP-1) protein is Biosynthetic arginine decarboxylase.